Consider the following 1023-residue polypeptide: RTX-I toxin determinant A from serotypes 1/9 (1023 aa).

3 helical membrane-spanning segments follow: residues Asn-226–Asn-256, Ser-297–Phe-326, and Ile-367–Leu-406. 6 Hemolysin-type calcium-binding repeats span residues Phe-730–Ile-747, Tyr-748–Ile-765, His-766–Leu-783, Ile-784–Leu-801, Leu-812–Phe-829, and Asp-830–Tyr-847.

It belongs to the RTX prokaryotic toxin (TC 1.C.11) family. Palmitoylated by ApxIC. The toxin only becomes active when modified.

It localises to the secreted. The protein localises to the host cell membrane. Functionally, one of the virulence factors of A.pleuropneumoniae, which has a strong hemolytic activity and is cytotoxic for alveolar macrophages and neutrophils. The sequence is that of RTX-I toxin determinant A from serotypes 1/9 (apxIA) from Actinobacillus pleuropneumoniae (Haemophilus pleuropneumoniae).